We begin with the raw amino-acid sequence, 201 residues long: Ras-related protein Rab-5A (201 aa).

GTP-binding positions include 16-24 (GEAAVGKSS), 35-41 (LDYQEST), 64-68 (DTAGQ), 122-125 (NKLD), and 152-154 (SAK). An Effector region motif is present at residues 38-46 (QESTIGAAF). 2 S-geranylgeranyl cysteine lipidation sites follow: cysteine 199 and cysteine 200.

Belongs to the small GTPase superfamily. Rab family.

The protein resides in the cell membrane. Its subcellular location is the endosome membrane. With respect to regulation, regulated by guanine nucleotide exchange factors (GEFs) which promote the exchange of bound GDP for free GTP. Functionally, required for the fusion of plasma membranes and early endosomes. In Dictyostelium discoideum (Social amoeba), this protein is Ras-related protein Rab-5A (rab5A).